We begin with the raw amino-acid sequence, 331 residues long: Undecaprenyl-phosphate 4-deoxy-4-formamido-L-arabinose transferase (331 aa).

A run of 2 helical transmembrane segments spans residues 236–256 (LSIVGGGIASFGILFGLFLIL) and 270–290 (VFPLFSILFIFIGAQFVGLGL).

It belongs to the glycosyltransferase 2 family.

The protein resides in the cell inner membrane. It catalyses the reaction UDP-4-deoxy-4-formamido-beta-L-arabinose + di-trans,octa-cis-undecaprenyl phosphate = 4-deoxy-4-formamido-alpha-L-arabinopyranosyl di-trans,octa-cis-undecaprenyl phosphate + UDP. Its pathway is glycolipid biosynthesis; 4-amino-4-deoxy-alpha-L-arabinose undecaprenyl phosphate biosynthesis; 4-amino-4-deoxy-alpha-L-arabinose undecaprenyl phosphate from UDP-4-deoxy-4-formamido-beta-L-arabinose and undecaprenyl phosphate: step 1/2. It participates in bacterial outer membrane biogenesis; lipopolysaccharide biosynthesis. Its function is as follows. Catalyzes the transfer of 4-deoxy-4-formamido-L-arabinose from UDP to undecaprenyl phosphate. The modified arabinose is attached to lipid A and is required for resistance to polymyxin and cationic antimicrobial peptides. This is Undecaprenyl-phosphate 4-deoxy-4-formamido-L-arabinose transferase from Shewanella sediminis (strain HAW-EB3).